The chain runs to 98 residues: Feather keratin 1 (98 aa).

Belongs to the avian keratin family. As to quaternary structure, the avian keratins (F-ker, S-ker, C-ker and B-ker) are a complex mixture of very similar polypeptides.

The polypeptide is Feather keratin 1 (Gallus gallus (Chicken)).